The chain runs to 304 residues: Probable cobalamin biosynthesis protein CobD (304 aa).

The next 5 helical transmembrane spans lie at 2–22 (IVVL…KEYI), 50–70 (ILFS…AVYL), 73–93 (FILV…FSIT), 147–167 (VDGY…GAFI), and 284–304 (AAYS…AVFL).

It belongs to the CobD/CbiB family.

It is found in the cell membrane. It functions in the pathway cofactor biosynthesis; adenosylcobalamin biosynthesis. Its function is as follows. Converts cobyric acid to cobinamide by the addition of aminopropanol on the F carboxylic group. The sequence is that of Probable cobalamin biosynthesis protein CobD from Thermoplasma volcanium (strain ATCC 51530 / DSM 4299 / JCM 9571 / NBRC 15438 / GSS1).